Reading from the N-terminus, the 591-residue chain is Oligopeptide-binding protein OppA (591 aa).

This sequence belongs to the bacterial solute-binding protein 5 family. As to quaternary structure, the complex is composed of an ATP-binding protein (OppD), two transmembrane proteins (OppB and OppC) and a solute-binding protein (OppA).

The protein resides in the periplasm. Functionally, part of the ABC transporter complex OppABCD involved in the uptake of oligopeptides. Peptide-binding protein that shows broad specificity but a moderate preference for hydrophobic oligopeptides and those that are 6-16 amino acids long. In Mycobacterium bovis (strain ATCC BAA-935 / AF2122/97), this protein is Oligopeptide-binding protein OppA.